A 1730-amino-acid polypeptide reads, in one-letter code: Myosin-7 (1730 aa).

The Myosin N-terminal SH3-like domain maps to 8–56 (TVGSHVWVEDPDDAWIDGEVEEVNSEEITVNCSGKTVVAKLNNVYPKDP). Residues 61 to 731 (LGVDDMTKLA…QMAEMDAHRA (671 aa)) form the Myosin motor domain. ATP-binding positions include 155–162 (GESGAGKT) and 208–216 (NNNSSRFGK). Actin-binding regions lie at residues 494–528 (LIEK…YQTF), 530–553 (NHKR…AGDV), 588–612 (FPPL…KQQL), and 612–634 (LQSL…KPNN). IQ domains follow at residues 757–786 (LQAA…EAAS), 782–811 (REAA…SACS), 831–850 (RRAT…HQRY), and 853–882 (TKKA…AAKE). Residues 883–1224 (TGALQDAKTK…VSDMETAEQI (342 aa)) are a coiled coil. The 352-residue stretch at 1327–1678 (DRIVPVFGSA…ISNLKLLLTN (352 aa)) folds into the Dilute domain. 2 disordered regions span residues 1367–1387 (QSST…FGRM) and 1456–1520 (DSSV…SSEE). Residues 1456 to 1465 (DSSVVNSPSK) show a composition bias toward low complexity. Over residues 1475–1508 (SSEENSPKKSSEENSPKESSGDKSPQKLSDDNSP) the composition is skewed to basic and acidic residues.

Belongs to the TRAFAC class myosin-kinesin ATPase superfamily. Myosin family. Plant myosin class XI subfamily. As to quaternary structure, homodimer.

Myosin heavy chain that is required for the cell cycle-regulated transport of various organelles and proteins for their segregation. Functions by binding with its tail domain to receptor proteins on organelles and exerting force with its N-terminal motor domain against actin filaments, thereby transporting its cargo along polarized actin cables. This Arabidopsis thaliana (Mouse-ear cress) protein is Myosin-7 (XI-A).